A 92-amino-acid polypeptide reads, in one-letter code: Small ribosomal subunit protein uS19 (92 aa).

It belongs to the universal ribosomal protein uS19 family.

Protein S19 forms a complex with S13 that binds strongly to the 16S ribosomal RNA. The chain is Small ribosomal subunit protein uS19 from Anoxybacillus flavithermus (strain DSM 21510 / WK1).